The primary structure comprises 297 residues: Aspartate carbamoyltransferase catalytic subunit (297 aa).

The carbamoyl phosphate site is built by Arg-49 and Thr-50. Lys-77 is an L-aspartate binding site. Carbamoyl phosphate contacts are provided by Arg-99, His-129, and Gln-132. L-aspartate-binding residues include Arg-162 and Arg-215. Residues Gly-256 and Pro-257 each coordinate carbamoyl phosphate.

This sequence belongs to the aspartate/ornithine carbamoyltransferase superfamily. ATCase family. Heterododecamer (2C3:3R2) of six catalytic PyrB chains organized as two trimers (C3), and six regulatory PyrI chains organized as three dimers (R2).

It catalyses the reaction carbamoyl phosphate + L-aspartate = N-carbamoyl-L-aspartate + phosphate + H(+). The protein operates within pyrimidine metabolism; UMP biosynthesis via de novo pathway; (S)-dihydroorotate from bicarbonate: step 2/3. Functionally, catalyzes the condensation of carbamoyl phosphate and aspartate to form carbamoyl aspartate and inorganic phosphate, the committed step in the de novo pyrimidine nucleotide biosynthesis pathway. The chain is Aspartate carbamoyltransferase catalytic subunit from Legionella pneumophila (strain Corby).